The following is a 233-amino-acid chain: Merozoite surface protein 1 (233 aa).

The signal sequence occupies residues 1–19; sequence MKIIFFLCSFLFFIINTQC. A compositionally biased stretch (polar residues) spans 58 to 67; that stretch reads SGTAVTTSTP. The disordered stretch occupies residues 58 to 110; it reads SGTAVTTSTPGSKGSVASGGSGGSVASGGSVASGGSGNSRRTNPSDNSSDSDA. The span at 74-94 shows a compositional bias: gly residues; it reads ASGGSGGSVASGGSVASGGSG. Polar residues predominate over residues 95-107; it reads NSRRTNPSDNSSD. N-linked (GlcNAc...) asparagine glycosylation is present at Asn-104.

Forms a complex composed of subunits p83, p30, p38, and p42 which remain non-covalently associated; the complex is formed at the merozoite surface prior to egress from host erythrocytes. Forms a complex composed of processed MSP1 subunits, MSP6 subunit p36 and MSP7; the complex is formed at the merozoite surface prior to egress from host erythrocytes. Within the complex, interacts (via subunit p38) with MSP6 subunit p36 and (via subunits p83, p30 and p38) with MSP7 (via subunit p22). Forms a complex composed of MSP1, MSP6, DBLMSP1 and DBLMSP2. Within the complex, interacts (via subunit p38) with DBLMSP1 and DBLMSP2. Forms a complex composed of MSP1, and rhoptry proteins RhopH3, RAP1 and CLAG9/RhopH3. Within the complex, interacts (via subunits p42 and p19) with RhopH3 (via C-terminus). Forms a complex composed of MSP1, MSP6, MSP7, MSP9 and MSP3; within the complex, MSP6 and MSP9 mediate the binding to the host erythrocyte. Interacts (via subunits p19 and p42) with MSP9; the interaction is direct; MSP1 subunits p19 or p42, and MSP9 form a co-ligand complex that interacts with host SLC4A1/Band 3 protein. May interact with PFD6. Interacts with host spectrin. The p190 precursor is cleaved by SUB1 prior to merozoite egress into 4 subunits p83, p30, p38, and p42 which remain non-covalently associated. SUB1-mediated proteolytic cleavage occurs in an orderly manner; the first cleavage occurs at the p83/p30 site, followed by cleavage at the p30/p38 site, the last cleavage occurs at the p38/p42 site. The order of cleavage is essential for parasite viability. SUB1-mediated processing is essential for merozoite egress. In a second processing step during erythrocyte invasion, p42 is cleaved by SUB2 into p33 and p19; the latter remains attached to the merozoite surface via its GPI-anchor and stays on the surface during the subsequent ring stage.

It localises to the cell membrane. The protein localises to the secreted. During the asexual blood stage, involved in merozoite egress from host erythrocytes possibly via its interaction with the host cytoskeleton protein spectrin resulting in the destabilization of the host cytoskeleton and thus leading to erythrocyte cell membrane rupture. Involved in the binding to host erythrocytes and is required for host erythrocyte invasion. This Plasmodium falciparum (isolate CDC / Honduras) protein is Merozoite surface protein 1.